A 198-amino-acid polypeptide reads, in one-letter code: Angiopoietin-like protein 8 (198 aa).

An N-terminal signal peptide occupies residues 1–15; sequence MAVLALCLLWTLASA.

Belongs to the ANGPTL8 family. In terms of assembly, interacts with ANGPTL3. Proteolytically cleaved at the N-terminus. In terms of tissue distribution, expressed in liver and fat. Enriched in white and brown adipose tissues.

The protein localises to the secreted. In terms of biological role, hormone that acts as a blood lipid regulator by regulating serum triglyceride levels. May be involved in the metabolic transition between fasting and refeeding: required to direct fatty acids to adipose tissue for storage in the fed state. According to a report, may act by promoting ANGPTL3 cleavage. According to another study, not required for cleavage of ANGPTL3. In Mus musculus (Mouse), this protein is Angiopoietin-like protein 8.